Consider the following 689-residue polypeptide: Glycine--tRNA ligase beta subunit (689 aa).

Belongs to the class-II aminoacyl-tRNA synthetase family. Tetramer of two alpha and two beta subunits.

The protein resides in the cytoplasm. It catalyses the reaction tRNA(Gly) + glycine + ATP = glycyl-tRNA(Gly) + AMP + diphosphate. The protein is Glycine--tRNA ligase beta subunit of Edwardsiella ictaluri (strain 93-146).